The primary structure comprises 126 residues: Large ribosomal subunit protein bL19 (126 aa).

Belongs to the bacterial ribosomal protein bL19 family.

In terms of biological role, this protein is located at the 30S-50S ribosomal subunit interface and may play a role in the structure and function of the aminoacyl-tRNA binding site. In Paracoccus denitrificans (strain Pd 1222), this protein is Large ribosomal subunit protein bL19.